A 693-amino-acid chain; its full sequence is Sulfite reductase 1 [ferredoxin], chloroplastic (693 aa).

The transit peptide at 1–62 directs the protein to the chloroplast; that stretch reads MTTSFGAAIN…PSSIVRAVST (62 aa). [4Fe-4S] cluster contacts are provided by Cys-502, Cys-508, Cys-548, and Cys-552. Position 552 (Cys-552) interacts with siroheme.

This sequence belongs to the nitrite and sulfite reductase 4Fe-4S domain family. As to quaternary structure, monomer. Interacts with ferredoxin. The cofactor is siroheme. [4Fe-4S] cluster serves as cofactor. Phosphorylated; this phosphorylation reduces DNA-binding. As to expression, expressed in leaves, stems, roots and petals.

It is found in the plastid. The protein localises to the chloroplast stroma. Its subcellular location is the chloroplast nucleoid. It localises to the plastid stroma. The catalysed reaction is hydrogen sulfide + 6 oxidized [2Fe-2S]-[ferredoxin] + 3 H2O = sulfite + 6 reduced [2Fe-2S]-[ferredoxin] + 7 H(+). In terms of biological role, essential protein with sulfite reductase activity required in assimilatory sulfate reduction pathway during both primary and secondary metabolism and thus involved in development and growth. Its function is as follows. DNA-binding protein that binds to both double-stranded and single-stranded DNA without significant sequence specificity to reversibly repress the transcriptional activity of chloroplast nucleoids by promoting DNA compaction and possibly regulate DNA replication. This is Sulfite reductase 1 [ferredoxin], chloroplastic (SIR1) from Nicotiana tabacum (Common tobacco).